The following is a 540-amino-acid chain: MAKDIKFSADARSAMVRGVDILADTVKVTLGPKGRNVVLEKSFGSPLITNDGVTIAKEIELEDHFENMGAKLVSEVASKTNDIAGDGTTTATVLTQAIVREGIKNVTAGANPIGIRRGIETAVATAVEALKANSVPVSNKEAIAQVAAVSSRSEKVGEYISEAMEKVGNDGVITIEESKGMETELDVVEGMQFDRGYLSQYMVTDNEKMVADLDNPYILITDKKISNIQEILPLLENILKTSRPLLIIADDVDGEALPTLVLNKIRGTFNVVAVKAPGFGDRRKAMLEDIAILTGGTVITEDLGLELKDATIEALGQASKVTVDKDSTVIVEGSGDAEAIANRVAVIKSQIESSTSDFDREKLQERLAKLSGGVAVIKVGAATETELKEMKLRIEDALNATRAAVEEGIVSGGGTAFVNVLSAVEALDLSGDEATGRNIVLRALEEPVRQIALNAGFEGSIVIDRLKNSEAGTGFNAATGEWVNMIDAGIIDPVKVTRSALQNAASVASLILTTEAVVANQPEPASPTPAMDPSMMGGMM.

ATP is bound by residues 29-32 (TLGP), 86-90 (DGTTT), G413, 476-478 (NAA), and D492.

Belongs to the chaperonin (HSP60) family. As to quaternary structure, forms a cylinder of 14 subunits composed of two heptameric rings stacked back-to-back. Interacts with the co-chaperonin GroES.

The protein localises to the cytoplasm. The enzyme catalyses ATP + H2O + a folded polypeptide = ADP + phosphate + an unfolded polypeptide.. Together with its co-chaperonin GroES, plays an essential role in assisting protein folding. The GroEL-GroES system forms a nano-cage that allows encapsulation of the non-native substrate proteins and provides a physical environment optimized to promote and accelerate protein folding. This chain is Chaperonin GroEL, found in Streptococcus anginosus.